The following is a 447-amino-acid chain: Na(+)-translocating NADH-quinone reductase subunit A (447 aa).

This sequence belongs to the NqrA family. In terms of assembly, composed of six subunits; NqrA, NqrB, NqrC, NqrD, NqrE and NqrF.

It carries out the reaction a ubiquinone + n Na(+)(in) + NADH + H(+) = a ubiquinol + n Na(+)(out) + NAD(+). NQR complex catalyzes the reduction of ubiquinone-1 to ubiquinol by two successive reactions, coupled with the transport of Na(+) ions from the cytoplasm to the periplasm. NqrA to NqrE are probably involved in the second step, the conversion of ubisemiquinone to ubiquinol. The sequence is that of Na(+)-translocating NADH-quinone reductase subunit A from Haemophilus influenzae (strain PittGG).